The chain runs to 142 residues: Anti-sigma F factor (142 aa).

This sequence belongs to the anti-sigma-factor family.

The enzyme catalyses L-seryl-[protein] + ATP = O-phospho-L-seryl-[protein] + ADP + H(+). It catalyses the reaction L-threonyl-[protein] + ATP = O-phospho-L-threonyl-[protein] + ADP + H(+). Functionally, binds to sigma F and blocks its ability to form an RNA polymerase holoenzyme (E-sigma F). Phosphorylates SpoIIAA on a serine residue. This phosphorylation may enable SpoIIAA to act as an anti-anti-sigma factor that counteracts SpoIIAB and thus releases sigma F from inhibition. The sequence is that of Anti-sigma F factor from Clostridium kluyveri (strain NBRC 12016).